A 260-amino-acid polypeptide reads, in one-letter code: NADH-ubiquinone oxidoreductase chain 6 (260 aa).

Transmembrane regions (helical) follow at residues 2–22 (LTNY…FMII), 30–50 (SILY…ILGV), 52–72 (FIAI…FLFV), 101–121 (FLFQ…FGLF), 142–162 (VPSG…NLGI), and 211–231 (FFIF…SIIL).

This sequence belongs to the complex I subunit 6 family.

It localises to the mitochondrion membrane. The catalysed reaction is a ubiquinone + NADH + 5 H(+)(in) = a ubiquinol + NAD(+) + 4 H(+)(out). In terms of biological role, core subunit of the mitochondrial membrane respiratory chain NADH dehydrogenase (Complex I) that is believed to belong to the minimal assembly required for catalysis. Complex I functions in the transfer of electrons from NADH to the respiratory chain. The immediate electron acceptor for the enzyme is believed to be ubiquinone. This Acanthamoeba castellanii (Amoeba) protein is NADH-ubiquinone oxidoreductase chain 6 (ND6).